The chain runs to 52 residues: MEQKILCEVNNCSYWGKGNKCTADAIYVVSHTGETAENSRETDCKTFKPHDL.

This is an uncharacterized protein from Bacillus subtilis (strain 168).